A 1205-amino-acid chain; its full sequence is Centrosome and spindle pole associated protein 1 (1205 aa).

2 coiled-coil regions span residues Gln-12–Gly-34 and Lys-87–Lys-108. The disordered stretch occupies residues Leu-16–Ser-37. A compositionally biased stretch (basic and acidic residues) spans Ser-158 to Ser-173. Disordered stretches follow at residues Ser-158–Leu-187, Ser-222–Ser-277, and Gln-380–Leu-467. Positions Asn-176–Leu-187 are enriched in polar residues. Composition is skewed to basic and acidic residues over residues Ser-222 to Val-233 and Ala-257 to Gly-275. The stretch at Glu-357–Ala-391 forms a coiled coil. Basic and acidic residues-rich tracts occupy residues Asp-401–Lys-410 and Arg-417–Arg-428. Ser-405 is subject to Phosphoserine. Over residues Thr-433–Pro-447 the composition is skewed to pro residues. The stretch at Ser-574–Asn-618 forms a coiled coil. The disordered stretch occupies residues Ala-677–Phe-704. Residues Asn-685–Pro-697 are compositionally biased toward polar residues. The stretch at Arg-724–Tyr-813 forms a coiled coil. A phosphoserine mark is found at Ser-850 and Ser-869. The interval Ser-862–Ala-881 is disordered. Positions Ala-874–Leu-911 form a coiled coil. At Ser-915 the chain carries Phosphoserine. Positions Gln-993–Ala-1014 form a coiled coil. Disordered regions lie at residues Gly-1086 to Ser-1105, Arg-1124 to Thr-1169, and Asn-1182 to Ala-1205. Positions Arg-1124–Asn-1134 are enriched in basic and acidic residues. Residues Thr-1135–Asp-1145 show a composition bias toward acidic residues. Positions Asp-1146 to Arg-1156 are enriched in basic and acidic residues.

Interacts with PLEKHG6. Interacts with ARMC9, TOGARAM1, CCDC66, CEP104 and CEP290. In terms of processing, phosphorylated. Phosphorylation increases in colcemide-treated cells.

It localises to the cytoplasm. Its subcellular location is the cytoskeleton. The protein localises to the microtubule organizing center. The protein resides in the centrosome. It is found in the spindle. It localises to the spindle pole. Its subcellular location is the cell projection. The protein localises to the cilium. In terms of biological role, may play a role in cell-cycle-dependent microtubule organization. The polypeptide is Centrosome and spindle pole associated protein 1 (Cspp1) (Mus musculus (Mouse)).